Here is a 542-residue protein sequence, read N- to C-terminus: MAEGEESKKMNLQTSYFDVVGICCSSEVSIVGNVLRQVDGVKEFSVIVPSRTVIVVHDTFLISPLQIVKALNQARLEASVRPYGETSLKSQWPSPFAIVSGVLLVLSFFKYFYSPLEWLAIVAVVAGVFPILAKAVASVTRFRLDINALTLIAVIATLCMQDFTEAATIVFLFSVADWLESSAAHKASIVMSSLMSLAPRKAVIADTGLEVDVDEVGINTVVSVKAGESIPIDGVVVDGSCDVDEKTLTGESFPVSKQRESTVMAATINLNGYIKVKTTALARDCVVAKMTKLVEEAQKSQTKTQRFIDKCSRYYTPAVVVSAACFAVIPVLLKVQDLSHWFHLALVVLVSGCPCGLILSTPVATFCALTKAATSGFLIKTGDCLETLAKIKIVAFDKTGTITKAEFMVSDFRSLSPSINLHKLLYWVSSIECKSSHPMAAALIDYARSVSVEPKPDIVENFQNFPGEGVYGRIDGQDIYIGNKRIAQRAGCLTDNVPDIEATMKRGKTIGYIYMGAKLTGSFNLLDGCRYGVAQALKELKS.

At 1-89 (MAEGEESKKM…VRPYGETSLK (89 aa)) the chain is on the cytoplasmic side. The 67-residue stretch at 13 to 79 (QTSYFDVVGI…ALNQARLEAS (67 aa)) folds into the HMA domain. A helical transmembrane segment spans residues 90-111 (SQWPSPFAIVSGVLLVLSFFKY). The Extracellular portion of the chain corresponds to 112–114 (FYS). A helical transmembrane segment spans residues 115-134 (PLEWLAIVAVVAGVFPILAK). The Cytoplasmic portion of the chain corresponds to 135–141 (AVASVTR). A helical transmembrane segment spans residues 142-162 (FRLDINALTLIAVIATLCMQD). A topological domain (extracellular) is located at residue Phe163. The chain crosses the membrane as a helical span at residues 164–184 (TEAATIVFLFSVADWLESSAA). The Cytoplasmic portion of the chain corresponds to 185–310 (HKASIVMSSL…QTKTQRFIDK (126 aa)). Residues 311-333 (CSRYYTPAVVVSAACFAVIPVLL) traverse the membrane as a helical segment. At 334-341 (KVQDLSHW) the chain is on the extracellular side. A helical membrane pass occupies residues 342-359 (FHLALVVLVSGCPCGLIL). Over 360–542 (STPVATFCAL…VAQALKELKS (183 aa)) the chain is Cytoplasmic.

It belongs to the cation transport ATPase (P-type) (TC 3.A.3) family. Type IB subfamily.

It localises to the membrane. The chain is Putative inactive cadmium/zinc-transporting ATPase HMA3 (HMA3) from Arabidopsis thaliana (Mouse-ear cress).